Reading from the N-terminus, the 458-residue chain is Argininosuccinate lyase (458 aa).

This sequence belongs to the lyase 1 family. Argininosuccinate lyase subfamily.

Its subcellular location is the cytoplasm. It catalyses the reaction 2-(N(omega)-L-arginino)succinate = fumarate + L-arginine. The protein operates within amino-acid biosynthesis; L-arginine biosynthesis; L-arginine from L-ornithine and carbamoyl phosphate: step 3/3. The protein is Argininosuccinate lyase of Acetivibrio thermocellus (strain ATCC 27405 / DSM 1237 / JCM 9322 / NBRC 103400 / NCIMB 10682 / NRRL B-4536 / VPI 7372) (Clostridium thermocellum).